Consider the following 741-residue polypeptide: Endoplasmic reticulum membrane sensor NFE2L1 (741 aa).

Residues 7–24 form a helical; Signal-anchor for type II membrane protein membrane-spanning segment; the sequence is YLTEGLLQFTILLSLIGV. 2 disordered regions span residues 108–148 and 198–220; these read DPEG…TEQG and QKEQ…WSGE. Residues 113-131 are compositionally biased toward polar residues; sequence VSGSQPNSGLALESSSGLQ. A cholesterol recognition/amino acid consensus (CRAC) region region spans residues 191-199; the sequence is VFDYSHRQK. Over residues 198 to 216 the composition is skewed to basic and acidic residues; the sequence is QKEQDVDKELQDGREREDT. N-linked (GlcNAc...) asparagine glycosylation is found at Asn-319 and Asn-331. Positions 350–354 are CPD; the sequence is SPEVE. Asn-394 carries an N-linked (GlcNAc...) asparagine glycan. Disordered stretches follow at residues 441–501 and 551–582; these read EEEF…DSET and SALD…QMSR. The Destruction motif motif lies at 447–451; the sequence is DSGLS. The segment covering 447–492 has biased composition (low complexity); it reads DSGLSLDSSHSPSSLSSSEGSSSSSSSSSSSSASSSASSSFSEEGA. At Ser-497 the chain carries Phosphoserine; by CK2. Residues 567-582 show a composition bias toward basic and acidic residues; sequence GSKEKQADFLDKQMSR. Ser-568 bears the Phosphoserine mark. Residues 623–686 enclose the bZIP domain; sequence LIRDIRRRGK…RQMKQKVQSL (64 aa). The basic motif stretch occupies residues 625-644; the sequence is RDIRRRGKNKMAAQNCRKRK. The tract at residues 651-665 is leucine-zipper; sequence LERDVEDLQRDKARL. The segment at 722 to 741 is disordered; it reads RTMADQQARRQERKPKDRRK. The Nuclear localization signal motif lies at 730-737; the sequence is RRQERKPK. Over residues 732-741 the composition is skewed to basic residues; that stretch reads QERKPKDRRK.

The protein belongs to the bZIP family. CNC subfamily. Interacts with KEAP1. As to quaternary structure, interacts (via CPD region) with FBXW7; leading to its ubiquitination and degradation. Interacts with SYVN1/HRD1; leading to its ubiquitination and degradation. Interacts (when ubiquitinated) with DDI2; leading to its cleavage. In terms of assembly, interacts (via the bZIP domain) with small MAF protein (MAFF, MAFG or MAFK); required for binding to antioxidant response elements (AREs) on DNA. Interacts (via Destruction motif) with BTRC; leading to its ubiquitination and degradation. Interacts with CEBPB; the heterodimer represses expression of DSPP during odontoblast differentiation. Interacts with MOTS-c, a peptide produced by the mitochondrially encoded 12S rRNA MT-RNR1. Cleaved at Leu-104 by the aspartyl protease DDI2 following retrotranslocation, releasing the protein from the endoplasmic reticulum membrane and forming the transcription factor NRF1 that translocates into the nucleus. Ubiquitination is prerequisite for cleavage by aspartyl protease DDI2. Post-translationally, N-glycosylated in normal conditions, when it has a single-pass type II membrane protein topology, with the DNA-binding domain facing the endoplasmic reticulum lumen. Deglycosylated during retrotranslocation to the cytosolic side of the membrane, to have a single-pass type III membrane protein topology with the major part of the protein facing the cytosol. In terms of processing, ubiquitinated by the SCF(FBXW7) complex and SYVN1/HRD1, leading to its degradation by the proteasome. Ubiquitinated during retrotranslocation to the cytosolic side of the membrane: ubiquitination does not lead to degradation and is required for processing by the aspartyl protease DDI2 and subsequent release from the endoplasmic reticulum membrane. Phosphorylation by CK2 at Ser-497 inhibits transcription factor activity, possibly by affecting DNA-binding activity. Phosphorylation at Ser-568 is required for interaction with CEBPB. Post-translationally, ubiquitinated by the SCF(BTRC) complex in the nucleus, leading to its degradation by the proteasome. In terms of tissue distribution, isoform 1: Widely expressed including kidney, brown fat, white fat, large intestine, small intestine, stomach, lung, brain and liver. Isoform 1: Expressed in mouse embryonic fibroblasts (MEF). Isoform 2: Widely expressed including kidney, brown fat, white fat, large intestine, small intestine, stomach, lung, brain and liver. Isoform 2: levels in white fat, lung and liver are increased compared to isoform 1 (at protein level). Isoform 2: levels are elevated in brown fat and brain, but are reduced in liver compared to isoform 1 levels. Isoform 2: Expressed in mouse embryonic fibroblasts (MEF).

It is found in the endoplasmic reticulum membrane. The protein resides in the nucleus. Its subcellular location is the cytoplasm. Its function is as follows. Endoplasmic reticulum membrane sensor that translocates into the nucleus in response to various stresses to act as a transcription factor. Constitutes a precursor of the transcription factor NRF1. Able to detect various cellular stresses, such as cholesterol excess, oxidative stress or proteasome inhibition. In response to stress, it is released from the endoplasmic reticulum membrane following cleavage by the protease DDI2 and translocates into the nucleus to form the transcription factor NRF1. Acts as a key sensor of cholesterol excess: in excess cholesterol conditions, the endoplasmic reticulum membrane form of the protein directly binds cholesterol via its CRAC motif, preventing cleavage and release of the transcription factor NRF1, thereby allowing expression of genes promoting cholesterol removal, such as CD36. Involved in proteasome homeostasis: in response to proteasome inhibition, it is released from the endoplasmic reticulum membrane, translocates to the nucleus and activates expression of genes encoding proteasome subunits. In terms of biological role, CNC-type bZIP family transcription factor that translocates to the nucleus and regulates expression of target genes in response to various stresses. Heterodimerizes with small-Maf proteins (MAFF, MAFG or MAFK) and binds DNA motifs including the antioxidant response elements (AREs), which regulate expression of genes involved in oxidative stress response. Activates or represses expression of target genes, depending on the context. Plays a key role in cholesterol homeostasis by acting as a sensor of cholesterol excess: in low cholesterol conditions, translocates into the nucleus and represses expression of genes involved in defense against cholesterol excess, such as CD36. In excess cholesterol conditions, the endoplasmic reticulum membrane form of the protein directly binds cholesterol via its CRAC motif, preventing cleavage and release of the transcription factor NRF1, thereby allowing expression of genes promoting cholesterol removal. Critical for redox balance in response to oxidative stress: acts by binding the AREs motifs on promoters and mediating activation of oxidative stress response genes, such as GCLC, GCLM, GSS, MT1 and MT2. Plays an essential role during fetal liver hematopoiesis: probably has a protective function against oxidative stress and is involved in lipid homeostasis in the liver. Involved in proteasome homeostasis: in response to proteasome inhibition, mediates the 'bounce-back' of proteasome subunits by translocating into the nucleus and activating expression of genes encoding proteasome subunits. Also involved in regulating glucose flux. Together with CEBPB; represses expression of DSPP during odontoblast differentiation. In response to ascorbic acid induction, activates expression of SP7/Osterix in osteoblasts. Functionally, transcription factor that binds the antioxidant response elements (ARE) consensus sequence on promoters and activates their expression. Transcription factor that binds the extended kappa 3 site of the TNF-alpha promoter after Fc gamma RIII stimulation and participates in the induction of this cytokine. The polypeptide is Endoplasmic reticulum membrane sensor NFE2L1 (Mus musculus (Mouse)).